Here is a 528-residue protein sequence, read N- to C-terminus: Cytochrome P450 monooxygenase lenC (528 aa).

Residues Phe-5–Leu-27 form a helical membrane-spanning segment. Cys-469 provides a ligand contact to heme.

It belongs to the cytochrome P450 family. Heme serves as cofactor.

Its subcellular location is the membrane. The protein operates within alkaloid biosynthesis. Its function is as follows. Nonribosomal peptide synthetase; part of the gene cluster that mediates the biosynthesis of the ergot alkaloids lentopeptins A and B. Within the pathway, lenC catalyzes the post-NRPS oxidative modification steps using as substrate the N-acyldiketopiperazine intermediate produced by the NRPS lenA. Lentopeptin A forms via a stereospecific hydroxylation, followed by a spontaneous bicyclic lactam core formation, while lentopeptin B is produced through an initial dehydrogenation, followed by a bicyclic lactam core formation and stereospecific hydration. The phenylalanine ammonia-lyase lenB provides the cinnamic acid starter unit to the NRPS lenA for the synthesis of the N-acyldiketopiperazine intermediate which in turn is converted into lentopeptins A and B by lenC. This Aspergillus lentulus protein is Cytochrome P450 monooxygenase lenC.